Reading from the N-terminus, the 1574-residue chain is Pentafunctional AROM polypeptide (1574 aa).

The 3-dehydroquinate synthase stretch occupies residues 1-384 (MSCSNNTEPT…HEPRATTVED (384 aa)). Residues 49-51 (DTN), 85-88 (EISK), 116-118 (GGV), and aspartate 121 contribute to the NAD(+) site. 7-phospho-2-dehydro-3-deoxy-D-arabino-heptonate is bound at residue arginine 132. Position 141-142 (141-142 (TT)) interacts with NAD(+). Residues aspartate 148 and lysine 154 each contribute to the 7-phospho-2-dehydro-3-deoxy-D-arabino-heptonate site. Lysine 163 contacts NAD(+). Asparagine 164 contacts 7-phospho-2-dehydro-3-deoxy-D-arabino-heptonate. Residues 181-184 (FLET) and asparagine 192 contribute to the NAD(+) site. Residue glutamate 196 coordinates Zn(2+). Residues 196–199 (EVIK) and lysine 250 each bind 7-phospho-2-dehydro-3-deoxy-D-arabino-heptonate. Glutamate 260 (proton acceptor; for 3-dehydroquinate synthase activity) is an active-site residue. Residues 264–268 (RNLLN) and histidine 271 each bind 7-phospho-2-dehydro-3-deoxy-D-arabino-heptonate. Position 271 (histidine 271) interacts with Zn(2+). Histidine 275 (proton acceptor; for 3-dehydroquinate synthase activity) is an active-site residue. 2 residues coordinate 7-phospho-2-dehydro-3-deoxy-D-arabino-heptonate: histidine 287 and lysine 356. Histidine 287 contacts Zn(2+). The EPSP synthase stretch occupies residues 397–837 (ITPGVSTKLA…WDTLSQSFGL (441 aa)). The active-site For EPSP synthase activity is cysteine 819. The tract at residues 858 to 1052 (TRSVFIVGMR…TAKEQSFFVS (195 aa)) is shikimate kinase. Residue 865 to 872 (GMRGAGKT) coordinates ATP. The 3-dehydroquinase stretch occupies residues 1053–1266 (LTVPSVDSAV…AAPGQLSAAE (214 aa)). Histidine 1169 serves as the catalytic Proton acceptor; for 3-dehydroquinate dehydratase activity. The Schiff-base intermediate with substrate; for 3-dehydroquinate dehydratase activity role is filled by lysine 1197. Positions 1279-1574 (AQSFHLFGKP…NGDEIPTSTD (296 aa)) are shikimate dehydrogenase.

This sequence in the N-terminal section; belongs to the sugar phosphate cyclases superfamily. Dehydroquinate synthase family. It in the 2nd section; belongs to the EPSP synthase family. The protein in the 3rd section; belongs to the shikimate kinase family. In the 4th section; belongs to the type-I 3-dehydroquinase family. This sequence in the C-terminal section; belongs to the shikimate dehydrogenase family. In terms of assembly, homodimer. Requires Zn(2+) as cofactor.

The protein resides in the cytoplasm. It catalyses the reaction 7-phospho-2-dehydro-3-deoxy-D-arabino-heptonate = 3-dehydroquinate + phosphate. The catalysed reaction is 3-dehydroquinate = 3-dehydroshikimate + H2O. It carries out the reaction shikimate + NADP(+) = 3-dehydroshikimate + NADPH + H(+). The enzyme catalyses shikimate + ATP = 3-phosphoshikimate + ADP + H(+). It catalyses the reaction 3-phosphoshikimate + phosphoenolpyruvate = 5-O-(1-carboxyvinyl)-3-phosphoshikimate + phosphate. It functions in the pathway metabolic intermediate biosynthesis; chorismate biosynthesis; chorismate from D-erythrose 4-phosphate and phosphoenolpyruvate: step 2/7. It participates in metabolic intermediate biosynthesis; chorismate biosynthesis; chorismate from D-erythrose 4-phosphate and phosphoenolpyruvate: step 3/7. The protein operates within metabolic intermediate biosynthesis; chorismate biosynthesis; chorismate from D-erythrose 4-phosphate and phosphoenolpyruvate: step 4/7. Its pathway is metabolic intermediate biosynthesis; chorismate biosynthesis; chorismate from D-erythrose 4-phosphate and phosphoenolpyruvate: step 5/7. It functions in the pathway metabolic intermediate biosynthesis; chorismate biosynthesis; chorismate from D-erythrose 4-phosphate and phosphoenolpyruvate: step 6/7. In terms of biological role, the AROM polypeptide catalyzes 5 consecutive enzymatic reactions in prechorismate polyaromatic amino acid biosynthesis. In Verticillium alfalfae (strain VaMs.102 / ATCC MYA-4576 / FGSC 10136) (Verticillium wilt of alfalfa), this protein is Pentafunctional AROM polypeptide.